A 360-amino-acid chain; its full sequence is Nucleoporin SEH1 (360 aa).

WD repeat units follow at residues 10-49 (DHKDLIHDVSFDFHGRRMATCSSDQSVKVWDKSENGDWHC), 55-96 (THSG…SNDK), 111-152 (DSRT…NLSQ), 160-210 (SCKL…RKYA), 217-258 (SVSD…KELS), and 276-315 (NHNSQVWRVSWNITGTVLASSGDDGTVRLWKANYMDNWKC).

Belongs to the WD repeat SEC13 family. In terms of assembly, component of the Nup107-160 subcomplex of the nuclear pore complex (NPC). The Nup107-160 subcomplex includes NUP160, NUP133, NUP107, NUP98, NUP85, NUP43, NUP37, SEH1 and SEC13. Component of the GATOR2 subcomplex, composed of MIOS, SEC13, SEH1L, WDR24 and WDR59. The GATOR2 complex interacts with CASTOR1 and CASTOR2; the interaction is negatively regulated by arginine. The GATOR2 complex interacts with SESN1, SESN2 and SESN3; the interaction is negatively regulated by amino acids.

The protein localises to the chromosome. It is found in the centromere. Its subcellular location is the kinetochore. It localises to the nucleus. The protein resides in the nuclear pore complex. The protein localises to the lysosome membrane. The GATOR2 complex is negatively regulated by the upstream amino acid sensors CASTOR1 and SESN2, which sequester the GATOR2 complex in absence of amino acids. In the presence of abundant amino acids, GATOR2 is released from CASTOR1 and SESN2 and activated. Component of the Nup107-160 subcomplex of the nuclear pore complex (NPC). The Nup107-160 subcomplex is required for the assembly of a functional NPC. The Nup107-160 subcomplex is also required for normal kinetochore microtubule attachment, mitotic progression and chromosome segregation. This subunit plays a role in recruitment of the Nup107-160 subcomplex to the kinetochore. Functionally, as a component of the GATOR2 complex, functions as an activator of the amino acid-sensing branch of the mTORC1 signaling pathway. The GATOR2 complex indirectly activates mTORC1 through the inhibition of the GATOR1 subcomplex. GATOR2 probably acts as an E3 ubiquitin-protein ligase toward GATOR1. In the presence of abundant amino acids, the GATOR2 complex mediates ubiquitination of the NPRL2 core component of the GATOR1 complex, leading to GATOR1 inactivation. In the absence of amino acids, GATOR2 is inhibited, activating the GATOR1 complex. The sequence is that of Nucleoporin SEH1 (seh1l) from Xenopus tropicalis (Western clawed frog).